A 316-amino-acid chain; its full sequence is Methionyl-tRNA formyltransferase (316 aa).

112-115 (SLLP) contacts (6S)-5,6,7,8-tetrahydrofolate.

It belongs to the Fmt family.

The enzyme catalyses L-methionyl-tRNA(fMet) + (6R)-10-formyltetrahydrofolate = N-formyl-L-methionyl-tRNA(fMet) + (6S)-5,6,7,8-tetrahydrofolate + H(+). In terms of biological role, attaches a formyl group to the free amino group of methionyl-tRNA(fMet). The formyl group appears to play a dual role in the initiator identity of N-formylmethionyl-tRNA by promoting its recognition by IF2 and preventing the misappropriation of this tRNA by the elongation apparatus. This Psychromonas ingrahamii (strain DSM 17664 / CCUG 51855 / 37) protein is Methionyl-tRNA formyltransferase.